The chain runs to 287 residues: 2-dehydro-3-deoxyphosphooctonate aldolase (287 aa).

This sequence belongs to the KdsA family.

It localises to the cytoplasm. The enzyme catalyses D-arabinose 5-phosphate + phosphoenolpyruvate + H2O = 3-deoxy-alpha-D-manno-2-octulosonate-8-phosphate + phosphate. It functions in the pathway carbohydrate biosynthesis; 3-deoxy-D-manno-octulosonate biosynthesis; 3-deoxy-D-manno-octulosonate from D-ribulose 5-phosphate: step 2/3. It participates in bacterial outer membrane biogenesis; lipopolysaccharide biosynthesis. In Leptospira interrogans serogroup Icterohaemorrhagiae serovar copenhageni (strain Fiocruz L1-130), this protein is 2-dehydro-3-deoxyphosphooctonate aldolase.